We begin with the raw amino-acid sequence, 911 residues long: Band 3 anion transport protein (911 aa).

Met1 carries the post-translational modification N-acetylmethionine. Residues 1–26 (MEELQDDYEDMMEENLEQEEYEDPDI) show a composition bias toward acidic residues. The tract at residues 1–40 (MEELQDDYEDMMEENLEQEEYEDPDIPESQMEEPAAHDTE) is disordered. Residues 1 to 403 (MEELQDDYED…LSDITDAFSP (403 aa)) are Cytoplasmic-facing. Phosphotyrosine is present on residues Tyr8, Tyr21, and Tyr46. The segment at 13–31 (EENLEQEEYEDPDIPESQM) is (Microbial infection) Interaction with P.falciparum (isolate K1) FBPA. The tract at residues 55 to 290 (HKVYVELQEL…LGRAAATLMS (236 aa)) is globular. The interaction with ANK1 stretch occupies residues 176 to 185 (AVLTRSGDPS). 2 positions are modified to phosphoserine: Ser185 and Ser350. The dimerization arm stretch occupies residues 304–357 (RGELLHSLEGFLDCSLVLPPTDAPSEQALLSLVPVQRELLRRRYQSSPAKPDSS). At Tyr359 the chain carries Phosphotyrosine. A helical membrane pass occupies residues 404–427 (QVLAAVIFIYFAALSPAITFGGLL). Residues 428–435 (GEKTRNQM) are Extracellular-facing. The chain crosses the membrane as a helical span at residues 436–456 (GVSELLISTAVQGILFALLGA). Topologically, residues 457-459 (QPL) are cytoplasmic. A discontinuously helical transmembrane segment spans residues 460-476 (LVVGFSGPLLVFEEAFF). At 477–485 (SFCETNGLE) the chain is on the extracellular side. A helical membrane pass occupies residues 486–506 (YIVGRVWIGFWLILLVVLVVA). The Cytoplasmic portion of the chain corresponds to 507 to 518 (FEGSFLVRFISR). The chain crosses the membrane as a helical span at residues 519–541 (YTQEIFSFLISLIFIYETFSKLI). At 542 to 570 (KIFQDHPLQKTYNYNVLMVPKPQGPLPNT) the chain is on the extracellular side. The tract at residues 559–630 (MVPKPQGPLP…DFFIQDTYTQ (72 aa)) is involved in anion transport. A helical membrane pass occupies residues 571–591 (ALLSLVLMAGTFFFAMMLRKF). Over 592-602 (KNSSYFPGKLR) the chain is Cytoplasmic. The chain crosses the membrane as a helical span at residues 603-623 (RVIGDFGVPISILIMVLVDFF). At 624-663 (IQDTYTQKLSVPDGFKVSNSSARGWVIHPLGLRSEFPIWM) the chain is on the extracellular side. Asn642 is a glycosylation site (N-linked (GlcNAc...) (complex) asparagine). A helical transmembrane segment spans residues 664 to 684 (MFASALPALLVFILIFLESQI). Over 685–700 (TTLIVSKPERKMVKGS) the chain is Cytoplasmic. Residues 701–719 (GFHLDLLLVVGMGGVAALF) traverse the membrane as a helical segment. The discontinuously helical transmembrane segment at 720–737 (GMPWLSATTVRSVTHANA) threads the bilayer. A (Microbial infection) 5ABC region; interaction with P.falciparum (isolate 3D7) MSP9 region spans residues 720 to 761 (GMPWLSATTVRSVTHANALTVMGKASTPGAAAQIQEVKEQRI). Residues 738-760 (LTVMGKASTPGAAAQIQEVKEQR) lie on the Cytoplasmic side of the membrane. A run of 2 helical transmembrane segments spans residues 761–781 (ISGL…PILS) and 782–800 (RIPL…VTSL). At 801-838 (SGIQLFDRILLLFKPPKYHPDVPYVKRVKTWRMHLFTG) the chain is on the cytoplasmic side. Residues 839–869 (IQIICLAVLWVVKSTPASLALPFVLILTVPL) constitute an intramembrane region (discontinuously helical). Cys843 carries S-palmitoyl cysteine lipidation. Topologically, residues 870-911 (RRVLLPLIFRNVELQCLDADDAKATFDEEEGRDEYDEVAMPV) are cytoplasmic. Tyr904 carries the post-translational modification Phosphotyrosine.

Belongs to the anion exchanger (TC 2.A.31) family. In terms of assembly, a dimer in solution, but in its membrane environment, it exists primarily as a mixture of dimers and tetramers and spans the membrane asymmetrically. Component of the ankyrin-1 complex in the erythrocyte, composed of ANK1, RHCE, RHAG, SLC4A1, EPB42, GYPA, GYPB and AQP1. Interacts with STOM; this interaction positively regulates SLC4A1 activity. Interacts with GYPA; a GYPA monomer is bound at each end of the SLC4A1 dimer forming a heterotetramer. Three SLC4A1 dimers (Band 3-I, Band 3-II and Band 3-III) participates in the ankyrin-1 complex. Interacts (via the cytoplasmic domain) with EPB42; this interaction is mediated by the SLC4A1 Band 3-I dimer. Interacts (via the cytoplasmic domain) directly with ANK1; this interaction is mediated by the SLC4A1 Band 3-II and Band 3-III dimers. As to quaternary structure, interacts with TMEM139. (Microbial infection) Interacts (via N-terminus) with P.falciparum (isolate K1) aldolase FBPA; the interaction inhibits FBPA catalytic activity. In terms of assembly, (Microbial infection) Interacts (via the 5ABC region) with P.falciparum (isolate 3D7) MSP9/ABRA (via N-terminus). As to quaternary structure, (Microbial infection) Interacts (via the 5ABC region) with P.falciparum (isolate 3D7) MSP1 p42 subunit. Post-translationally, phosphorylated on Tyr-8 and Tyr-21 most likely by SYK. PP1-resistant phosphorylation that precedes Tyr-359 and Tyr-904 phosphorylation. In terms of processing, phosphorylated on Tyr-359 and Tyr-904 most likely by LYN. PP1-inhibited phosphorylation that follows Tyr-8 and Tyr-21 phosphorylation. N-glycosylated. As to expression, detected in erythrocytes (at protein level). In terms of tissue distribution, expressed in kidney (at protein level).

Its subcellular location is the cell membrane. It is found in the basolateral cell membrane. The enzyme catalyses hydrogencarbonate(in) + chloride(out) = hydrogencarbonate(out) + chloride(in). Its activity is regulated as follows. Phenyl isothiocyanate inhibits anion transport in vitro. Its function is as follows. Functions both as a transporter that mediates electroneutral anion exchange across the cell membrane and as a structural protein. Component of the ankyrin-1 complex of the erythrocyte membrane; required for normal flexibility and stability of the erythrocyte membrane and for normal erythrocyte shape via the interactions of its cytoplasmic domain with cytoskeletal proteins, glycolytic enzymes, and hemoglobin. Functions as a transporter that mediates the 1:1 exchange of inorganic anions across the erythrocyte membrane. Mediates chloride-bicarbonate exchange in the kidney, and is required for normal acidification of the urine. In terms of biological role, (Microbial infection) Acts as a receptor for P.falciparum (isolate 3D7) MSP9 and thus, facilitates merozoite invasion of erythrocytes. Acts as a receptor for P.falciparum (isolate 3D7) MSP1 and thus, facilitates merozoite invasion of erythrocytes. The protein is Band 3 anion transport protein of Homo sapiens (Human).